The primary structure comprises 148 residues: Glutamyl-tRNA(Gln) amidotransferase subunit C, mitochondrial (148 aa).

The protein belongs to the GatC family. Subunit of the heterotrimeric GatCAB amidotransferase (AdT) complex, composed of A, B and C subunits.

It localises to the mitochondrion. The enzyme catalyses L-glutamyl-tRNA(Gln) + L-glutamine + ATP + H2O = L-glutaminyl-tRNA(Gln) + L-glutamate + ADP + phosphate + H(+). In terms of biological role, allows the formation of correctly charged Gln-tRNA(Gln) through the transamidation of misacylated Glu-tRNA(Gln) in the mitochondria. The reaction takes place in the presence of glutamine and ATP through an activated gamma-phospho-Glu-tRNA(Gln). The protein is Glutamyl-tRNA(Gln) amidotransferase subunit C, mitochondrial of Drosophila pseudoobscura pseudoobscura (Fruit fly).